The primary structure comprises 236 residues: MDVKIFDNDTEAGKYAFDLIKQGMDNGAKVLGLATGSTPVTMYKAMVNSDVDFSNMTSINLDEYVGLAPDNDQSYRYFMQSNLFDKKPFKETFVPNGLAKGPEEETTRYNKVIADHPINIQVLGIGRNGHIGFNEPGSPFDAETRKVPLTQSTIDANARFFASEDDVPRYAYSMGIGSILKSKKILLLAFGENKADAVKKMIEGPVTNDVPASALQKHSDVVVILDKAAASKLSKK.

Asp-62 acts as the Proton acceptor; for enolization step in catalysis. Catalysis depends on Asn-128, which acts as the For ring-opening step. His-130 (proton acceptor; for ring-opening step) is an active-site residue. Catalysis depends on Glu-135, which acts as the For ring-opening step.

It belongs to the glucosamine/galactosamine-6-phosphate isomerase family. NagB subfamily.

It catalyses the reaction alpha-D-glucosamine 6-phosphate + H2O = beta-D-fructose 6-phosphate + NH4(+). It participates in amino-sugar metabolism; N-acetylneuraminate degradation; D-fructose 6-phosphate from N-acetylneuraminate: step 5/5. Catalyzes the reversible isomerization-deamination of glucosamine 6-phosphate (GlcN6P) to form fructose 6-phosphate (Fru6P) and ammonium ion. The sequence is that of Glucosamine-6-phosphate deaminase from Lacticaseibacillus paracasei (strain ATCC 334 / BCRC 17002 / CCUG 31169 / CIP 107868 / KCTC 3260 / NRRL B-441) (Lactobacillus paracasei).